The chain runs to 2621 residues: Nonribosomal peptide synthetase dtpA (2621 aa).

The adenylation 1 stretch occupies residues 446-844 (CMEQPNAEAI…GRKDQQVKIR (399 aa)). Residues 978-1054 (QPYTQVEETL…EVALYSRALS (77 aa)) form the Carrier 1 domain. O-(pantetheine 4'-phosphoryl)serine is present on Ser1015. Residues 1095–1506 (EDIYPCTALQ…LNQLELAGPQ (412 aa)) form a condensation 1 region. Positions 1534 to 1930 (SRTQPGASAI…GRRDNQVKLR (397 aa)) are adenylation 2. The region spanning 2071–2147 (QPSTTQEALV…LFCTNASTSI (77 aa)) is the Carrier 2 domain. Ser2108 is subject to O-(pantetheine 4'-phosphoryl)serine. The condensation 2 stretch occupies residues 2220 to 2618 (AIFKLHGSKV…HSARPIASID (399 aa)).

Belongs to the NRP synthetase family.

It functions in the pathway alkaloid biosynthesis. In terms of biological role, nonribosomal peptide synthetase; part of the gene cluster that mediates the biosynthesis of the dimeric diketopiperazine alkaloid ditryptophenaline. The nonribosomal peptide synthase dtpA accepts L-tryptophan and L-phenylalanine as its substrates and forms the phenylalanyl-tryptophanyl cyclic dipeptide product cyclophenylalanyltryptophenyl. The N-methyltransferase dtpB is responsible for the N-methylation of cyclophenylalanyltryptophenyl to yield cyclo-N-methylphenylalanyltryptophenyl. The cytochrome P450 monooxygenase is responsible not only for pyrroloindole ring formation but also for concurrent dimerization of N-methylphenylalanyltryptophanyl diketopiperazine monomers into a homodimeric product. The sequence is that of Nonribosomal peptide synthetase dtpA from Aspergillus flavus (strain ATCC 200026 / FGSC A1120 / IAM 13836 / NRRL 3357 / JCM 12722 / SRRC 167).